The primary structure comprises 637 residues: Serine/threonine-protein kinase Nek11 (637 aa).

The Protein kinase domain occupies 29–287 (YVLQQKLGSG…AIEILKIPYI (259 aa)). ATP-binding positions include 35 to 43 (LGSGSFGTV) and Lys61. Asp158 functions as the Proton acceptor in the catalytic mechanism. Residue Ser273 is modified to Phosphoserine; by CHEK1. Positions 302–385 (TLEDKNLDCQ…QELRSRNFQQ (84 aa)) form a coiled coil. Positions 399–446 (GMEEKEEQPEGRPSCSPQDEDEERWQDREEEFDEPTLENLSEPQPIPS) are disordered. Residues 416 to 434 (QDEDEERWQDREEEFDEPT) show a composition bias toward acidic residues.

The protein belongs to the protein kinase superfamily. NEK Ser/Thr protein kinase family. NIMA subfamily. As to quaternary structure, interacts with NEK2. The cofactor is Mn(2+). Mg(2+) serves as cofactor. Post-translationally, phosphorylated by NEK2. Phosphorylation at Ser-273 is important for its activation.

It localises to the nucleus. It is found in the nucleolus. It catalyses the reaction L-seryl-[protein] + ATP = O-phospho-L-seryl-[protein] + ADP + H(+). It carries out the reaction L-threonyl-[protein] + ATP = O-phospho-L-threonyl-[protein] + ADP + H(+). Autorepressed by intramolecular binding of the C-terminus which dissociates following phosphorylation by NEK2. Activated in response to DNA damage. Inhibited by zinc. Its function is as follows. Protein kinase which plays an important role in the G2/M checkpoint response to DNA damage. Controls degradation of CDC25A by directly phosphorylating it on residues whose phosphorylation is required for BTRC-mediated polyubiquitination and degradation. This Macaca fascicularis (Crab-eating macaque) protein is Serine/threonine-protein kinase Nek11 (NEK11).